The sequence spans 149 residues: Flagellar assembly factor FliW (149 aa).

This sequence belongs to the FliW family. Interacts with translational regulator CsrA and flagellin(s).

Its subcellular location is the cytoplasm. Its function is as follows. Acts as an anti-CsrA protein, binds CsrA and prevents it from repressing translation of its target genes, one of which is flagellin. Binds to flagellin and participates in the assembly of the flagellum. This is Flagellar assembly factor FliW from Thermotoga maritima (strain ATCC 43589 / DSM 3109 / JCM 10099 / NBRC 100826 / MSB8).